A 514-amino-acid chain; its full sequence is ATP synthase subunit alpha (514 aa).

169–176 provides a ligand contact to ATP; sequence GDRQTGKT.

The protein belongs to the ATPase alpha/beta chains family. In terms of assembly, F-type ATPases have 2 components, CF(1) - the catalytic core - and CF(0) - the membrane proton channel. CF(1) has five subunits: alpha(3), beta(3), gamma(1), delta(1), epsilon(1). CF(0) has three main subunits: a(1), b(2) and c(9-12). The alpha and beta chains form an alternating ring which encloses part of the gamma chain. CF(1) is attached to CF(0) by a central stalk formed by the gamma and epsilon chains, while a peripheral stalk is formed by the delta and b chains.

The protein localises to the cell membrane. It carries out the reaction ATP + H2O + 4 H(+)(in) = ADP + phosphate + 5 H(+)(out). In terms of biological role, produces ATP from ADP in the presence of a proton gradient across the membrane. The alpha chain is a regulatory subunit. The chain is ATP synthase subunit alpha from Buchnera aphidicola subsp. Baizongia pistaciae (strain Bp).